A 225-amino-acid polypeptide reads, in one-letter code: GTP:AMP phosphotransferase, mitochondrial (225 aa).

Residue 24–29 (GSGKGT) coordinates GTP. Residues 45-74 (SSGDILRQEIKSESTLGREATTYIAQGKLL) form an NMP region. Residues S46, R51, 72 to 74 (KLL), 103 to 106 (GFPR), and Q110 contribute to the AMP site. The segment at 144 to 181 (NRYVHVPSGRVYNLQYNPPKVPGLDDITGEPLTKRLDD) is LID. Residues R145 and 154-155 (VY) contribute to the GTP site. AMP contacts are provided by R178 and R189. S218 is a binding site for GTP.

It belongs to the adenylate kinase family. AK3 subfamily. In terms of assembly, monomer.

The protein resides in the mitochondrion matrix. The catalysed reaction is a ribonucleoside 5'-triphosphate + AMP = a ribonucleoside 5'-diphosphate + ADP. Functionally, involved in maintaining the homeostasis of cellular nucleotides by catalyzing the interconversion of nucleoside phosphates. Has GTP:AMP phosphotransferase and ITP:AMP phosphotransferase activities. Does not accept ATP as phosphate donor. This Saccharomyces cerevisiae (strain ATCC 204508 / S288c) (Baker's yeast) protein is GTP:AMP phosphotransferase, mitochondrial.